The primary structure comprises 130 residues: Protein ApaG (130 aa).

The 125-residue stretch at 3–127 (RAVTRQIEVL…FSLDSPDIRR (125 aa)) folds into the ApaG domain.

The sequence is that of Protein ApaG from Afipia carboxidovorans (strain ATCC 49405 / DSM 1227 / KCTC 32145 / OM5) (Oligotropha carboxidovorans).